A 1603-amino-acid polypeptide reads, in one-letter code: Gag-Pol polyprotein (1603 aa).

The segment covering 128–141 has biased composition (basic and acidic residues); sequence VGETTVQRDAKMAP. Positions 128–150 are disordered; the sequence is VGETTVQRDAKMAPEETATPKTV. Residues 172–175 carry the PPXY motif motif; that stretch reads PPPY. The LYPX(n)L motif motif lies at 180–184; that stretch reads LYPSL. The interval 181 to 217 is disordered; it reads YPSLAGVGEQQGQGGDTPPGAEQSRAEPGHAGQAPGP. Involved in capsid protein dimerization regions lie at residues 217 to 259, 290 to 298, and 351 to 362; these read PALT…KLIT, HDVTNLMRV, and GMVGNPQGQAAL. The Nuclear export signal motif lies at 219–229; that stretch reads LTDWARVREEL. CCHC-type zinc fingers lie at residues 507–524 and 533–550; these read GLCY…QCPK and ERCQ…QCRK. A Nuclear/nucleolar localization signal motif is present at residues 524 to 527; sequence KKRK. The disordered stretch occupies residues 543–575; it reads HNAKQCRKRDGNQGQRPGKGLSSGPWPGPEPPA. In terms of domain architecture, Peptidase A2 spans 609–690; sequence ITALLDSGAD…VRGSILGRDC (82 aa). Asp-614 functions as the For protease activity; shared with dimeric partner in the catalytic mechanism. The Reverse transcriptase domain maps to 750-938; the sequence is LQLGHIEPSL…PGVQYLGYKL (189 aa). Residues Asp-815, Asp-890, Asp-891, Asp-1158, Glu-1192, Asp-1213, and Asp-1272 each coordinate Mg(2+). The region spanning 1149-1280 is the RNase H type-1 domain; sequence PVPGPTVFTD…ADSQATFQAY (132 aa). Residues 1280-1321 form an Integrase-type zinc finger; it reads YPLREAKDLHTALHIGPRALSKACNISMQQAREVVQTCPHCN. Zn(2+)-binding residues include His-1289, His-1293, Cys-1317, and Cys-1320. The region spanning 1333–1496 is the Integrase catalytic domain; it reads RGLGPLQIWQ…TPIQKHWRPT (164 aa). The Mg(2+) site is built by Asp-1344, Asp-1401, and Glu-1437. Residues 1502–1550 constitute a DNA-binding region (integrase-type); it reads PPVKIRIETGEWEKGWNVLVWGRGYAAVKNRDTDKVIWVPSRKVKPDIT. Positions 1548 to 1567 are involved in homooctamerization; the sequence is DITQKDEVTKKDEASPLFAG. The disordered stretch occupies residues 1569 to 1603; it reads SDWIPWEDEQEGLQGETASNKQERPGEDTLAANES.

In terms of assembly, active as a homodimer. Homodimer. Homomultimer. Homohexamer. As to quaternary structure, homodimer; further associates as a homooctamer. In terms of assembly, heterodimer of alpha and beta subunits. Three forms of RT exist: alpha-alpha (alpha-Pol), beta-beta (beta-Pol), and alpha-beta, with the major form being the heterodimer. Both the polymerase and RNase H active sites are located in the alpha subunit of heterodimeric RT alpha-beta. Mg(2+) serves as cofactor. It depends on Mn(2+) as a cofactor. Post-translationally, specific enzymatic cleavages in vivo yield mature proteins. In terms of processing, capsid protein p27: The cleavage at the C-terminus is slowly trimmed by the viral protease, sometimes being cut internally thereby generating the short version of the capsid protein and a capsid protein C-terminally extended by 3 amino acids in a ratio of 2:1.

Its subcellular location is the virion. It carries out the reaction DNA(n) + a 2'-deoxyribonucleoside 5'-triphosphate = DNA(n+1) + diphosphate. It catalyses the reaction Endonucleolytic cleavage to 5'-phosphomonoester.. Functionally, capsid protein p27: Self-associates to form the irregular polyhedron core composed of hexamers and pentamers, that encapsulates the genomic RNA-nucleocapsid complex. Assembles as a tube in vitro. Binds to inositol hexakisphosphate (IP6), which allows the assembly of the polyhedral capsid. Plays a role in the oligomerization of the Gag polyprotein and in the stabilization of the immature particle. Essential layering element during tube assembly. Allows the cooperative binging of Gag to the host plasma membrane. Its function is as follows. Binds strongly to viral nucleic acids and promotes their packaging. Plays a role in the maturation-stabilization of the viral dimeric RNA via highly structured zinc-binding motifs. In terms of biological role, the aspartyl protease mediates proteolytic cleavages of Gag and Gag-Pol polyproteins during or shortly after the release of the virion from the plasma membrane. Cleavages take place as an ordered, step-wise cascade to yield mature proteins. This process is called maturation. Displays maximal activity during the budding process just prior to particle release from the cell. Functionally, catalyzes viral DNA integration into the host chromosome, by performing a series of DNA cutting and joining reactions. This recombination event is an essential step in the viral replication cycle. Has a strong preference for using the 3'-OH at the viral DNA end as a nucleophile. This chain is Gag-Pol polyprotein (gag-pol), found in Gallus gallus (Chicken).